We begin with the raw amino-acid sequence, 174 residues long: Large ribosomal subunit protein uL5 (174 aa).

It belongs to the universal ribosomal protein uL5 family. As to quaternary structure, part of the 50S ribosomal subunit; contacts the 5S rRNA and probably tRNA. Forms a bridge to the 30S subunit in the 70S ribosome.

Functionally, this is one of the proteins that bind and probably mediate the attachment of the 5S RNA into the large ribosomal subunit, where it forms part of the central protuberance. In the 70S ribosome it contacts protein S13 of the 30S subunit (bridge B1b), connecting the 2 subunits; this bridge is implicated in subunit movement. May contact the P site tRNA; the 5S rRNA and some of its associated proteins might help stabilize positioning of ribosome-bound tRNAs. The polypeptide is Large ribosomal subunit protein uL5 (Halorubrum lacusprofundi (strain ATCC 49239 / DSM 5036 / JCM 8891 / ACAM 34)).